The following is a 694-amino-acid chain: DNA-binding protein RFX2 (694 aa).

Residues H174 to P249 constitute a DNA-binding region (RFX-type winged-helix). 2 disordered regions span residues Q268–H309 and D659–M694. A compositionally biased stretch (polar residues) spans N288–E299. Over residues Q300–H309 the composition is skewed to low complexity.

The protein belongs to the RFX family. As to quaternary structure, homodimer. Heterodimer; heterodimerizes with other rfx proteins.

Its subcellular location is the nucleus. The protein resides in the cytoplasm. In terms of biological role, transcription factor that acts as a key regulator of ciliogenesis. Specifically regulates expression of genes required for cilium assembly and function. Recognizes and binds the X-box, a regulatory motif with DNA sequence 5'-GTNRCC(0-3N)RGYAAC-3' present on promoters. Required for neural tube closure and neural ciliogenesis. The sequence is that of DNA-binding protein RFX2 (rfx2) from Xenopus tropicalis (Western clawed frog).